Here is a 306-residue protein sequence, read N- to C-terminus: Recombination-associated protein RdgC (306 aa).

It belongs to the RdgC family.

The protein localises to the cytoplasm. It localises to the nucleoid. Its function is as follows. May be involved in recombination. The protein is Recombination-associated protein RdgC of Pseudomonas syringae pv. syringae (strain B728a).